We begin with the raw amino-acid sequence, 445 residues long: MTKKYFGTDGIRGRVGEFPITPDFMLKLGWAAGMAFRSMGACRILVGKDTRISGYMFESALEAGLSAAGADVMLLGPMPTPAIAYLTRTFHAEAGIVISASHNPHDDNGIKFFSGQGTKLPDEIELMIEELLDAPMTVVESSKLGKVSRINDASGRYIEFCKSSVPSSTNFAGLKIVVDCAHGATYKVAPSVFKELGADVTVLSAQPNGLNINDNCGSTHMEQLQAAVLAEHADLGIAFDGDGDRVLMVDHTGAIVDGDDLLFIIARDLHERNKLQGGVVGTLMSNLGLELALADLGIPFVRANVGDRYVIAELLERNWQVGGENSGHVVCFQHTTTGDAIIAALQVLLSLRRREESLAQARQALRKCPQVLLNVRFAGGENPIEHPAVKEACERVTLAMAGRGRVLLRKSGTEPLVRVMVEGDDETQVRGHAEDLAKLVTEVCA.

The active-site Phosphoserine intermediate is the serine 101. Residues serine 101, aspartate 240, aspartate 242, and aspartate 244 each contribute to the Mg(2+) site. Position 101 is a phosphoserine (serine 101).

Belongs to the phosphohexose mutase family. Mg(2+) serves as cofactor. In terms of processing, activated by phosphorylation.

It catalyses the reaction alpha-D-glucosamine 1-phosphate = D-glucosamine 6-phosphate. Functionally, catalyzes the conversion of glucosamine-6-phosphate to glucosamine-1-phosphate. The sequence is that of Phosphoglucosamine mutase from Pseudomonas fluorescens (strain SBW25).